A 93-amino-acid polypeptide reads, in one-letter code: Pyrimidine/purine nucleoside phosphorylase (93 aa).

Belongs to the nucleoside phosphorylase PpnP family.

It catalyses the reaction a purine D-ribonucleoside + phosphate = a purine nucleobase + alpha-D-ribose 1-phosphate. The enzyme catalyses adenosine + phosphate = alpha-D-ribose 1-phosphate + adenine. The catalysed reaction is cytidine + phosphate = cytosine + alpha-D-ribose 1-phosphate. It carries out the reaction guanosine + phosphate = alpha-D-ribose 1-phosphate + guanine. It catalyses the reaction inosine + phosphate = alpha-D-ribose 1-phosphate + hypoxanthine. The enzyme catalyses thymidine + phosphate = 2-deoxy-alpha-D-ribose 1-phosphate + thymine. The catalysed reaction is uridine + phosphate = alpha-D-ribose 1-phosphate + uracil. It carries out the reaction xanthosine + phosphate = alpha-D-ribose 1-phosphate + xanthine. In terms of biological role, catalyzes the phosphorolysis of diverse nucleosides, yielding D-ribose 1-phosphate and the respective free bases. Can use uridine, adenosine, guanosine, cytidine, thymidine, inosine and xanthosine as substrates. Also catalyzes the reverse reactions. The polypeptide is Pyrimidine/purine nucleoside phosphorylase (Pseudomonas syringae pv. syringae (strain B728a)).